The chain runs to 253 residues: Probable transcriptional regulatory protein SynRCC307_1833 (253 aa).

It belongs to the TACO1 family.

It is found in the cytoplasm. This chain is Probable transcriptional regulatory protein SynRCC307_1833, found in Synechococcus sp. (strain RCC307).